The sequence spans 297 residues: D-alanine--D-alanine ligase (297 aa).

Residues 95-294 enclose the ATP-grasp domain; that stretch reads KMLWKAFGLP…FEQLVVKILE (200 aa). 125 to 180 provides a ligand contact to ATP; it reads VAKLGLPLMVKPSLEGSSVGLTKVKAVEELKSAVEYALKFDNTILIEEWLAGDELT. Residues D248, E261, and N263 each contribute to the Mg(2+) site.

Belongs to the D-alanine--D-alanine ligase family. It depends on Mg(2+) as a cofactor. The cofactor is Mn(2+).

The protein localises to the cytoplasm. It catalyses the reaction 2 D-alanine + ATP = D-alanyl-D-alanine + ADP + phosphate + H(+). It participates in cell wall biogenesis; peptidoglycan biosynthesis. Its function is as follows. Cell wall formation. In Haemophilus influenzae (strain PittEE), this protein is D-alanine--D-alanine ligase.